Here is a 152-residue protein sequence, read N- to C-terminus: Deoxyuridine 5'-triphosphate nucleotidohydrolase (152 aa).

Residues 72–74 (RSG), Asn-85, and 89–91 (TID) contribute to the substrate site.

It belongs to the dUTPase family. Mg(2+) serves as cofactor.

It catalyses the reaction dUTP + H2O = dUMP + diphosphate + H(+). It participates in pyrimidine metabolism; dUMP biosynthesis; dUMP from dCTP (dUTP route): step 2/2. This enzyme is involved in nucleotide metabolism: it produces dUMP, the immediate precursor of thymidine nucleotides and it decreases the intracellular concentration of dUTP so that uracil cannot be incorporated into DNA. The chain is Deoxyuridine 5'-triphosphate nucleotidohydrolase from Bradyrhizobium sp. (strain ORS 278).